The following is a 521-amino-acid chain: Fucosyltransferase 3 (521 aa).

Residues 1–12 are compositionally biased toward basic and acidic residues; sequence MKRGKKNSDAGD. Residues 1–29 are disordered; that stretch reads MKRGKKNSDAGDRLTNSDTRTGSSELNAM. Residues 1-39 are Cytoplasmic-facing; it reads MKRGKKNSDAGDRLTNSDTRTGSSELNAMMKPSLSSMKT. The segment covering 14-26 has biased composition (polar residues); it reads LTNSDTRTGSSEL. A helical; Signal-anchor for type II membrane protein transmembrane segment spans residues 40-60; sequence MGLLLAVLMVASVMFSLSVVL. The Lumenal segment spans residues 61 to 521; sequence RDPPSDDVIE…QATLFHGCKD (461 aa). N-linked (GlcNAc...) asparagine glycans are attached at residues Asn-152, Asn-222, and Asn-493.

The protein belongs to the glycosyltransferase 37 family. In terms of tissue distribution, expressed in roots, stems, leaves, flowers, siliques and seedlings.

The protein localises to the golgi apparatus. It localises to the golgi stack membrane. It participates in protein modification; protein glycosylation. Its function is as follows. May be involved in cell wall biosynthesis. May act as a fucosyltransferase. The polypeptide is Fucosyltransferase 3 (FUT3) (Arabidopsis thaliana (Mouse-ear cress)).